The chain runs to 335 residues: Pro-cathepsin H (335 aa).

Positions 1-22 are cleaved as a signal peptide; sequence MWAVLPLLCAGAWLLGAPACGA. Residues 23–97 constitute a propeptide, activation peptide; the sequence is AELAANSLEK…DELKRKYLWS (75 aa). N-linked (GlcNAc...) asparagine glycans are attached at residues Asn72 and Asn101. 4 disulfides stabilise this stretch: Cys102–Cys327, Cys138–Cys181, Cys172–Cys214, and Cys272–Cys322. A propeptide spanning residues 106 to 115 is cleaved from the precursor; it reads KSNYLRGTGP. Residue Cys141 is part of the active site. Asn230 carries N-linked (GlcNAc...) asparagine glycosylation. Residues His281 and Asn301 contribute to the active site.

This sequence belongs to the peptidase C1 family. As to quaternary structure, composed of a mini chain and a large chain. The large chain may be split into heavy and light chain. All chains are held together by disulfide bonds.

It is found in the lysosome. It carries out the reaction Hydrolysis of proteins, acting as an aminopeptidase (notably, cleaving Arg-|-Xaa bonds) as well as an endopeptidase.. Its function is as follows. Important for the overall degradation of proteins in lysosomes. The polypeptide is Pro-cathepsin H (CTSH) (Bos taurus (Bovine)).